Reading from the N-terminus, the 509-residue chain is Lysine--tRNA ligase (509 aa).

Mg(2+) contacts are provided by glutamate 418 and glutamate 425.

Belongs to the class-II aminoacyl-tRNA synthetase family. In terms of assembly, homodimer. The cofactor is Mg(2+).

Its subcellular location is the cytoplasm. It carries out the reaction tRNA(Lys) + L-lysine + ATP = L-lysyl-tRNA(Lys) + AMP + diphosphate. The polypeptide is Lysine--tRNA ligase (Acinetobacter baumannii (strain AB307-0294)).